The chain runs to 247 residues: Triosephosphate isomerase (247 aa).

9–11 (NWK) serves as a coordination point for substrate. His93 serves as the catalytic Electrophile. Glu163 acts as the Proton acceptor in catalysis. Residues Gly169, Ser209, and 230 to 231 (GG) each bind substrate.

The protein belongs to the triosephosphate isomerase family. In terms of assembly, homodimer.

The protein localises to the cytoplasm. It carries out the reaction D-glyceraldehyde 3-phosphate = dihydroxyacetone phosphate. The protein operates within carbohydrate biosynthesis; gluconeogenesis. It participates in carbohydrate degradation; glycolysis; D-glyceraldehyde 3-phosphate from glycerone phosphate: step 1/1. In terms of biological role, involved in the gluconeogenesis. Catalyzes stereospecifically the conversion of dihydroxyacetone phosphate (DHAP) to D-glyceraldehyde-3-phosphate (G3P). In Dinoroseobacter shibae (strain DSM 16493 / NCIMB 14021 / DFL 12), this protein is Triosephosphate isomerase.